Reading from the N-terminus, the 312-residue chain is Transcription factor Ouib (312 aa).

The 76-residue stretch at 4–79 (IVCRVCGRQK…IKTQTKWLTI (76 aa)) folds into the ZAD domain. Zn(2+)-binding residues include Cys-6, Cys-9, Cys-52, and Cys-55. 5 C2H2-type zinc fingers span residues 167-189 (YICELCGTHATSKPTFQRHMRKH), 195-217 (FGCKDCDARFLSAGELRAHHRVH), 223-245 (FACRFCEKRYVSYMGRLIHERTH), 251-273 (YVCEECGKKFTTAYVLKNHMVIH), and 279-303 (FRCDICDRSFQRKAHLVTHTRSMMH).

Expressed predominantly in the prothoracic gland during embryonic and larval development.

It localises to the nucleus. Functionally, transcription factor required for ecdysteroid production in the prothoracic gland by activating transcription of the ecdysteroid biosynthesis gene spok. Binds to the 5'-AGCTTTATTATTTAG-3' DNA sequence in the spok enhancer region. This Drosophila melanogaster (Fruit fly) protein is Transcription factor Ouib.